Here is a 235-residue protein sequence, read N- to C-terminus: uncharacterized protein (235 aa).

2 consecutive transmembrane segments (helical) span residues 167–187 and 190–210; these read AFKL…LNEL and LFAY…LLLW.

Its subcellular location is the membrane. This is an uncharacterized protein from Saccharomyces cerevisiae (strain ATCC 204508 / S288c) (Baker's yeast).